The chain runs to 412 residues: Branched-chain alpha-ketoacid dehydrogenase kinase (412 aa).

A mitochondrion-targeting transit peptide spans 1–30 (MILASVLGSGPRGGPPLRPLLGPALSLRAR). Residue S31 is modified to Phosphoserine. S52 is subject to Phosphoserine; by autocatalysis. One can recognise a Histidine kinase domain in the interval 159–404 (LDDHKDVVTL…DVYLRLRHID (246 aa)). 2 positions are modified to N6-acetyllysine: K192 and K233. The ATP site is built by N279 and D315. Residue N279 participates in Mg(2+) binding. The K(+) site is built by V328, D330, and F333. 2 residues coordinate ATP: T334 and T335. 2 positions are modified to phosphoserine: S356 and S360. Residues H364, G367, and L370 each coordinate ATP. K(+) is bound at residue G367.

This sequence belongs to the PDK/BCKDK protein kinase family. Homodimer. Homotetramer. Dimerizes through interaction of two opposing nucleotide-binding domains. Interacts with E2 component of the branched-chain alpha-ketoacid dehydrogenase (BCKDH) complex. Competes with BCKDK for binding to the E2 component; this interaction is modulated by branched-chain alpha-keto acids. At steady state, BCKDH holoenzyme contains BCKDK and BCKDHA is phosphorylated. In response to high levels of branched-chain alpha-keto acids, the inhibitory BCKDK is replaced by activating PPM1K leading to BCKDHA dephosphorylation and BCAA degradation. In terms of processing, autophosphorylated.

It is found in the mitochondrion matrix. Its subcellular location is the mitochondrion. The catalysed reaction is L-seryl-[3-methyl-2-oxobutanoate dehydrogenase] + ATP = O-phospho-L-seryl-[3-methyl-2-oxobutanoate dehydrogenase] + ADP + H(+). It carries out the reaction L-seryl-[protein] + ATP = O-phospho-L-seryl-[protein] + ADP + H(+). In terms of biological role, serine/threonine-protein kinase component of macronutrients metabolism. Forms a functional kinase and phosphatase pair with PPM1K, serving as a metabolic regulatory node that coordinates branched-chain amino acids (BCAAs) with glucose and lipid metabolism via two distinct phosphoprotein targets: mitochondrial BCKDHA subunit of the branched-chain alpha-ketoacid dehydrogenase (BCKDH) complex and cytosolic ACLY, a lipogenic enzyme of Krebs cycle. Phosphorylates and inactivates mitochondrial BCKDH complex a multisubunit complex consisting of three multimeric components each involved in different steps of BCAA catabolism: E1 composed of BCKDHA and BCKDHB, E2 core composed of DBT monomers, and E3 composed of DLD monomers. Associates with the E2 component of BCKDH complex and phosphorylates BCKDHA on Ser-347, leading to conformational changes that interrupt substrate channeling between E1 and E2 and inactivates the BCKDH complex. Phosphorylates ACLY on Ser-455 in response to changes in cellular carbohydrate abundance such as occurs during fasting to feeding metabolic transition. Refeeding stimulates MLXIPL/ChREBP transcription factor, leading to increased BCKDK to PPM1K expression ratio, phosphorylation and activation of ACLY that ultimately results in the generation of malonyl-CoA and oxaloacetate immediate substrates of de novo lipogenesis and glucogenesis, respectively. Recognizes phosphosites having SxxE/D canonical motif. The sequence is that of Branched-chain alpha-ketoacid dehydrogenase kinase (BCKDK) from Bos taurus (Bovine).